We begin with the raw amino-acid sequence, 428 residues long: Adenylosuccinate synthetase (428 aa).

GTP-binding positions include 12 to 18 (GDEGKGK) and 40 to 42 (GHT). Asp13 (proton acceptor) is an active-site residue. The Mg(2+) site is built by Asp13 and Gly40. Residues 13–16 (DEGK), 38–41 (NAGH), Thr128, Arg142, Gln222, Thr237, and Arg301 contribute to the IMP site. His41 (proton donor) is an active-site residue. 297–303 (VNTGRAR) contacts substrate. GTP contacts are provided by residues Arg303, 329–331 (KLD), and 411–413 (STS).

The protein belongs to the adenylosuccinate synthetase family. In terms of assembly, homodimer. It depends on Mg(2+) as a cofactor.

It localises to the cytoplasm. It catalyses the reaction IMP + L-aspartate + GTP = N(6)-(1,2-dicarboxyethyl)-AMP + GDP + phosphate + 2 H(+). The protein operates within purine metabolism; AMP biosynthesis via de novo pathway; AMP from IMP: step 1/2. Its function is as follows. Plays an important role in the de novo pathway of purine nucleotide biosynthesis. Catalyzes the first committed step in the biosynthesis of AMP from IMP. The protein is Adenylosuccinate synthetase of Caulobacter sp. (strain K31).